The sequence spans 506 residues: Probable Xaa-Pro aminopeptidase BDCG_04966 (506 aa).

4 residues coordinate Mn(2+): Asp285, Asp296, Glu433, and Glu471.

Belongs to the peptidase M24B family. It depends on Mn(2+) as a cofactor.

The enzyme catalyses Release of any N-terminal amino acid, including proline, that is linked to proline, even from a dipeptide or tripeptide.. Catalyzes the removal of a penultimate prolyl residue from the N-termini of peptides. This chain is Probable Xaa-Pro aminopeptidase BDCG_04966, found in Ajellomyces dermatitidis (strain ER-3 / ATCC MYA-2586) (Blastomyces dermatitidis).